A 260-amino-acid polypeptide reads, in one-letter code: RNA polymerase sigma-G factor (260 aa).

A recognizes anti-sigma-G factor Gin (csfB) region spans residues 1 to 71 (MSRNKVEICG…GEYVDDLFQV (71 aa)). Residues 67 to 80 (DLFQVGCIGLMKSI) carry the Polymerase core binding motif. The H-T-H motif DNA-binding region spans 229–248 (QMEVAEEIGISQAQVSRLEK).

Belongs to the sigma-70 factor family. In terms of assembly, interacts with anti-sigma-G factor Gin (csfB).

Its activity is regulated as follows. Activity repressed by anti-sigma-G factor Gin (csfB) and Lon protease during the early stages of forespore development. When both Gin and sigma-G are expressed in E.coli Gin inhibits sigma-G activity, strongly suggesting Gin inhibits by direct physical interaction. Functionally, sigma factors are initiation factors that promote the attachment of RNA polymerase to specific initiation sites and are then released. This sigma factor is responsible for the expression of sporulation specific genes in the forespore. The protein is RNA polymerase sigma-G factor (sigG) of Bacillus subtilis (strain 168).